Reading from the N-terminus, the 93-residue chain is Putative sodium channel toxin Ts41 (93 aa).

A signal peptide spans 1–23 (MKIGVLFTIISMLCLLEVRKICS). Disulfide bonds link Cys-22–Cys-87, Cys-39–Cys-62, Cys-48–Cys-67, and Cys-52–Cys-69. Residues 26-88 (EGGYPRYFSF…FWNVYRKYCK (63 aa)) enclose the LCN-type CS-alpha/beta domain.

It belongs to the long (4 C-C) scorpion toxin superfamily. In terms of tissue distribution, expressed by the venom gland.

The protein resides in the secreted. In terms of biological role, the edited BmKBTx-like may modulate voltage-gated sodium channels (Nav). Its function is as follows. The non-edited form is able to form a heterodimer. In orthologs, a heterodimer with LVP beta-chain induces lipolysis in rat adipocytes, which is mediated through the beta-2 adrenergic receptor pathway (ADRB2). Since no LVP beta-chains have been identified in the venom of this scorpion, it is possible that this protein is not involved in a lipolysis process. This chain is Putative sodium channel toxin Ts41, found in Tityus serrulatus (Brazilian scorpion).